Consider the following 318-residue polypeptide: Methionyl-tRNA formyltransferase (318 aa).

112–115 is a binding site for (6S)-5,6,7,8-tetrahydrofolate; that stretch reads SLLP.

The protein belongs to the Fmt family.

The catalysed reaction is L-methionyl-tRNA(fMet) + (6R)-10-formyltetrahydrofolate = N-formyl-L-methionyl-tRNA(fMet) + (6S)-5,6,7,8-tetrahydrofolate + H(+). In terms of biological role, attaches a formyl group to the free amino group of methionyl-tRNA(fMet). The formyl group appears to play a dual role in the initiator identity of N-formylmethionyl-tRNA by promoting its recognition by IF2 and preventing the misappropriation of this tRNA by the elongation apparatus. In Citrifermentans bemidjiense (strain ATCC BAA-1014 / DSM 16622 / JCM 12645 / Bem) (Geobacter bemidjiensis), this protein is Methionyl-tRNA formyltransferase.